The primary structure comprises 98 residues: MKTLSEIKEILRKHKKILKEKYKVKSIAIFGSYAREEQKETSDIDILIDYYEPISLLKLIELENYLSDLLGIKVDLITKNSIHNPYVKKSIEEDLIYI.

The GSX(10)DXD motif motif lies at 31 to 45; it reads GSYAREEQKETSDID. Mg(2+)-binding residues include D43, D45, and D75.

Belongs to the MntA antitoxin family. As to quaternary structure, probably forms a complex with cognate toxin MJ1216. It depends on Mg(2+) as a cofactor.

The enzyme catalyses L-tyrosyl-[protein] + ATP = O-(5'-adenylyl)-L-tyrosyl-[protein] + diphosphate. It carries out the reaction O-(5'-adenylyl)-L-tyrosyl-[protein] + ATP = O-[5'-(adenylyl-(5'-&gt;3')-adenylyl)]-L-tyrosyl-[protein] + diphosphate. In terms of biological role, probable antitoxin component of a putative type VII toxin-antitoxin (TA) system. Neutralizes cognate toxic MJ1216 by di-AMPylation. The polypeptide is Putative protein adenylyltransferase MJ1217 (Methanocaldococcus jannaschii (strain ATCC 43067 / DSM 2661 / JAL-1 / JCM 10045 / NBRC 100440) (Methanococcus jannaschii)).